The primary structure comprises 1188 residues: DNA-directed RNA polymerase subunit beta (1188 aa).

Belongs to the RNA polymerase beta chain family. The RNAP catalytic core consists of 2 alpha, 1 beta, 1 beta' and 1 omega subunit. When a sigma factor is associated with the core the holoenzyme is formed, which can initiate transcription.

The catalysed reaction is RNA(n) + a ribonucleoside 5'-triphosphate = RNA(n+1) + diphosphate. Its function is as follows. DNA-dependent RNA polymerase catalyzes the transcription of DNA into RNA using the four ribonucleoside triphosphates as substrates. This chain is DNA-directed RNA polymerase subunit beta, found in Streptococcus gordonii (strain Challis / ATCC 35105 / BCRC 15272 / CH1 / DL1 / V288).